The primary structure comprises 194 residues: Peptidyl-tRNA hydrolase (194 aa).

A tRNA-binding site is contributed by Y17. Catalysis depends on H22, which acts as the Proton acceptor. Positions 68, 70, and 116 each coordinate tRNA.

This sequence belongs to the PTH family. In terms of assembly, monomer.

It is found in the cytoplasm. It catalyses the reaction an N-acyl-L-alpha-aminoacyl-tRNA + H2O = an N-acyl-L-amino acid + a tRNA + H(+). Functionally, hydrolyzes ribosome-free peptidyl-tRNAs (with 1 or more amino acids incorporated), which drop off the ribosome during protein synthesis, or as a result of ribosome stalling. Its function is as follows. Catalyzes the release of premature peptidyl moieties from peptidyl-tRNA molecules trapped in stalled 50S ribosomal subunits, and thus maintains levels of free tRNAs and 50S ribosomes. This is Peptidyl-tRNA hydrolase from Histophilus somni (strain 2336) (Haemophilus somnus).